Reading from the N-terminus, the 347-residue chain is Protein RecA (347 aa).

64-71 (GPESSGKT) is a binding site for ATP.

It belongs to the RecA family.

Its subcellular location is the cytoplasm. Its function is as follows. Can catalyze the hydrolysis of ATP in the presence of single-stranded DNA, the ATP-dependent uptake of single-stranded DNA by duplex DNA, and the ATP-dependent hybridization of homologous single-stranded DNAs. It interacts with LexA causing its activation and leading to its autocatalytic cleavage. The chain is Protein RecA from Bartonella tribocorum (strain CIP 105476 / IBS 506).